Here is a 1543-residue protein sequence, read N- to C-terminus: ATP-binding cassette sub-family C member 2 (1543 aa).

The Extracellular segment spans residues 1–26; it reads MDEFCNSTFWNLSLLKSPEADLPLCF. N-linked (GlcNAc...) asparagine glycans are attached at residues Asn-6 and Asn-11. The chain crosses the membrane as a helical span at residues 27 to 47; the sequence is EQTVLVWIPLGFLWLLAPWQL. Residues 48–67 lie on the Cytoplasmic side of the membrane; the sequence is YRIYRSRTKRFAITKFYLAK. A helical membrane pass occupies residues 68–88; the sequence is QVFVVCLLILAAIDLSLALTE. Residues 89-92 are Extracellular-facing; that stretch reads DTGQ. The helical transmembrane segment at 93–113 threads the bilayer; sequence ATIPPVKYTNPILYLCTWLLV. Residues 114–125 lie on the Cytoplasmic side of the membrane; sequence LVIQHCRQCCIQ. A helical membrane pass occupies residues 126–146; that stretch reads KNSWFLSMFWILSLLCGIFQF. Topologically, residues 147 to 164 are extracellular; that stretch reads QTLIRALLQDSKSNMTYS. A glycan (N-linked (GlcNAc...) asparagine) is linked at Asn-160. The chain crosses the membrane as a helical span at residues 165 to 185; sequence CLFFVSYGFQIVILILSAFSE. The Cytoplasmic segment spans residues 186-311; sequence SSDSTHAPSA…DFPKSWLVKA (126 aa). The segment at 260 to 285 is disordered; that stretch reads LKKSQQSPEGTSHGLTKKQSQSQDVL. Residues 263 to 283 are compositionally biased toward polar residues; sequence SQQSPEGTSHGLTKKQSQSQD. 2 positions are modified to phosphoserine: Ser-279 and Ser-281. Residues 312-332 traverse the membrane as a helical segment; sequence LFKTFYVVILKSFILKLAHDI. An ABC transmembrane type-1 1 domain is found at 320 to 603; it reads ILKSFILKLA…LPMVISSVIQ (284 aa). Topologically, residues 333-358 are extracellular; that stretch reads LLFLNPQLLKFLIGFVKDPDSYPWVG. The helical transmembrane segment at 359-379 threads the bilayer; that stretch reads YIYAILMFSVTLIQSFFLQCY. The Cytoplasmic portion of the chain corresponds to 380 to 435; it reads FQFCFVLGMTVRTTIIASVYKKALTLSNLARRQYTIGETVNLMSVDSQKLMDVTNY. Residues 436–456 form a helical membrane-spanning segment; that stretch reads IHLLWSSVLQIALSIFFLWRE. Residues 457–459 are Extracellular-facing; the sequence is LGP. A helical membrane pass occupies residues 460-480; sequence SILAGVGLMVLLVPVNGVLAT. The Cytoplasmic portion of the chain corresponds to 481 to 542; the sequence is KIRKIQVQNM…NLLRFSQLQT (62 aa). The chain crosses the membrane as a helical span at residues 543–563; it reads ILIFILHLTPTLVSVITFSVY. The Extracellular segment spans residues 564–585; that stretch reads VLVDSQNVLNAEKAFTSITLFN. A helical transmembrane segment spans residues 586 to 606; it reads ILRFPLAMLPMVISSVIQASV. The Cytoplasmic segment spans residues 607-969; that stretch reads SVDRLEQYLG…VKFSIYLKYL (363 aa). Positions 635 to 859 constitute an ABC transporter 1 domain; it reads VQFSEASFTW…KGVFAKNWKT (225 aa). 669 to 676 contributes to the ATP binding site; the sequence is GTVGSGKS. Position 876 is a phosphoserine (Ser-876). The interval 903–927 is disordered; sequence RENSLRRTLSRSSRSGSRRGKSLKS. The segment covering 908–917 has biased composition (low complexity); sequence RRTLSRSSRS. Phosphoserine occurs at positions 924 and 928. Residues 970–990 form a helical membrane-spanning segment; it reads QAVGWWSLLFIVIFYVLNYVA. Residues 977 to 1262 enclose the ABC transmembrane type-1 2 domain; that stretch reads LLFIVIFYVL…LVRMTSEVET (286 aa). Residues 991-1031 are Extracellular-facing; that stretch reads FIGTNLWLSAWTSDSEKQNGTDNSPSQRDMRIGVFGALGIA. An N-linked (GlcNAc...) asparagine glycan is attached at Asn-1009. A helical membrane pass occupies residues 1032–1052; that stretch reads QGIFLLSSSLWSIYACRNASK. Over 1053–1095 the chain is Cytoplasmic; that stretch reads TLHRQLLTNILRAPMSFFDTTPTGRIVNRFAGDISTVDDTLPQ. The helical transmembrane segment at 1096-1116 threads the bilayer; sequence TLRSWLLCFFGIVSTLVMICM. Position 1117 (Ala-1117) is a topological domain, extracellular. The helical transmembrane segment at 1118–1138 threads the bilayer; it reads TPIFIIIIIPLSILYVSVQVF. Topologically, residues 1139–1209 are cytoplasmic; that stretch reads YVATSRQLRR…TSNRWLAIRL (71 aa). Residues 1210–1230 form a helical membrane-spanning segment; it reads ELVGNLIVFCSALLLVIYKNS. Residues 1231 to 1232 lie on the Extracellular side of the membrane; sequence LT. A helical transmembrane segment spans residues 1233–1253; the sequence is GDTVGFVLSNALNITQTLNWL. The Cytoplasmic portion of the chain corresponds to 1254 to 1543; the sequence is VRMTSEVETN…GIESVNHTEL (290 aa). The 235-residue stretch at 1298–1532 folds into the ABC transporter 2 domain; it reads IQFNNYQVRY…MGPFYLMAKE (235 aa). 1332-1339 provides a ligand contact to ATP; sequence GRTGAGKS. Phosphoserine is present on Ser-1436.

It belongs to the ABC transporter superfamily. ABCC family. Conjugate transporter (TC 3.A.1.208) subfamily. In terms of tissue distribution, expressed in liver.

It localises to the apical cell membrane. It catalyses the reaction an S-substituted glutathione(in) + ATP + H2O = an S-substituted glutathione(out) + ADP + phosphate + H(+). It carries out the reaction taurolithocholate 3-sulfate(in) + ATP + H2O = taurolithocholate 3-sulfate(out) + ADP + phosphate + H(+). The enzyme catalyses ATP + H2O + xenobioticSide 1 = ADP + phosphate + xenobioticSide 2.. The catalysed reaction is leukotriene C4(in) + ATP + H2O = leukotriene C4(out) + ADP + phosphate + H(+). It catalyses the reaction 17beta-estradiol 17-O-(beta-D-glucuronate)(in) + ATP + H2O = 17beta-estradiol 17-O-(beta-D-glucuronate)(out) + ADP + phosphate + H(+). It carries out the reaction (4Z,15Z)-bilirubin IXalpha C8-beta-D-glucuronoside(in) + ATP + H2O = (4Z,15Z)-bilirubin IXalpha C8-beta-D-glucuronoside(out) + ADP + phosphate + H(+). The enzyme catalyses (4Z,15Z)-bilirubin IXalpha C8,C12-beta-D-bisglucuronoside(in) + ATP + H2O = (4Z,15Z)-bilirubin IXalpha C8,C12-beta-D-bisglucuronoside(out) + ADP + phosphate + H(+). Functionally, ATP-dependent transporter of the ATP-binding cassette (ABC) family that binds and hydrolyzes ATP to enable active transport of various substrates including many drugs, toxicants and endogenous compound across cell membranes. Transports a wide variety of conjugated organic anions such as sulfate-, glucuronide- and glutathione (GSH)-conjugates of endo- and xenobiotics substrates. Mediates hepatobiliary excretion of mono- and bis-glucuronidated bilirubin molecules and therefore play an important role in bilirubin detoxification. Mediates also hepatobiliary excretion of others glucuronide conjugates such as 17beta-estradiol 17-glucosiduronic acid and leukotriene C4. Transports sulfated bile salt such as taurolithocholate sulfate. Transports various anticancer drugs, such as anthracycline, vinca alkaloid and methotrexate and HIV-drugs such as protease inhibitors. This is ATP-binding cassette sub-family C member 2 from Mus musculus (Mouse).